Consider the following 142-residue polypeptide: Large ribosomal subunit protein uL11 (142 aa).

It belongs to the universal ribosomal protein uL11 family. As to quaternary structure, part of the ribosomal stalk of the 50S ribosomal subunit. Interacts with L10 and the large rRNA to form the base of the stalk. L10 forms an elongated spine to which L12 dimers bind in a sequential fashion forming a multimeric L10(L12)X complex. One or more lysine residues are methylated.

In terms of biological role, forms part of the ribosomal stalk which helps the ribosome interact with GTP-bound translation factors. In Edwardsiella ictaluri (strain 93-146), this protein is Large ribosomal subunit protein uL11.